Consider the following 461-residue polypeptide: Diaboline synthase (461 aa).

Catalysis depends on proton acceptor residues His-185 and Asp-400.

It belongs to the plant acyltransferase family. As to quaternary structure, monomer.

The protein localises to the cytoplasm. The catalysed reaction is 17,18-epoxy-17-hydroxycur-19-ene + acetyl-CoA = diaboline + CoA. The protein operates within alkaloid biosynthesis. In terms of biological role, acetyltransferase involved in the biosynthesis of curare monoterpene indole alkaloids (MIAs), natural products such as diaboline, a pharmacologically active compound used to regulate blood pressure. Curare alkaloids act as animal glycine receptor antagonists. Catalyzes the conversion of 17,18-epoxy-17-hydroxycur-19-ene (Wieland-Gumlich aldehyde) to diaboline. The chain is Diaboline synthase from Strychnos sp.